Here is a 514-residue protein sequence, read N- to C-terminus: Peptide chain release factor 3 (514 aa).

In terms of domain architecture, tr-type G spans 8 to 268 (KKRRTFAIIS…TFLEFAPEPH (261 aa)). GTP contacts are provided by residues 17–24 (SHPDAGKT), 85–89 (DTPGH), and 139–142 (NKLD).

It belongs to the TRAFAC class translation factor GTPase superfamily. Classic translation factor GTPase family. PrfC subfamily.

Its subcellular location is the cytoplasm. Its function is as follows. Increases the formation of ribosomal termination complexes and stimulates activities of RF-1 and RF-2. It binds guanine nucleotides and has strong preference for UGA stop codons. It may interact directly with the ribosome. The stimulation of RF-1 and RF-2 is significantly reduced by GTP and GDP, but not by GMP. The chain is Peptide chain release factor 3 from Streptococcus pyogenes serotype M5 (strain Manfredo).